We begin with the raw amino-acid sequence, 555 residues long: 2-succinyl-5-enolpyruvyl-6-hydroxy-3-cyclohexene-1-carboxylate synthase (555 aa).

The protein belongs to the TPP enzyme family. MenD subfamily. As to quaternary structure, homodimer. It depends on Mg(2+) as a cofactor. Mn(2+) is required as a cofactor. The cofactor is thiamine diphosphate.

It catalyses the reaction isochorismate + 2-oxoglutarate + H(+) = 5-enolpyruvoyl-6-hydroxy-2-succinyl-cyclohex-3-ene-1-carboxylate + CO2. It functions in the pathway quinol/quinone metabolism; 1,4-dihydroxy-2-naphthoate biosynthesis; 1,4-dihydroxy-2-naphthoate from chorismate: step 2/7. It participates in quinol/quinone metabolism; menaquinone biosynthesis. Functionally, catalyzes the thiamine diphosphate-dependent decarboxylation of 2-oxoglutarate and the subsequent addition of the resulting succinic semialdehyde-thiamine pyrophosphate anion to isochorismate to yield 2-succinyl-5-enolpyruvyl-6-hydroxy-3-cyclohexene-1-carboxylate (SEPHCHC). The chain is 2-succinyl-5-enolpyruvyl-6-hydroxy-3-cyclohexene-1-carboxylate synthase from Kineococcus radiotolerans (strain ATCC BAA-149 / DSM 14245 / SRS30216).